A 387-amino-acid chain; its full sequence is MTPTELNLKAKALLETHFDDIVLSGEISKITLHGSGHWYFDLKDERSSIACAMFKGANLKVGFKPAVGNFLELCGSVSLYPESGRYQFIATSMKKAGFGDLEAQFLALKERLQKEGLFDPRFKKSLPKFPKKVGIITSKTSAALQDMLKLIHQKEYFLAKIYIFDALTQGNNAPFSLIQALKKADDMDLDVLIIARGGGSREDLFCFNDENLAREIFKAKTPIISAIGHEIDYVISDFVADFRAPTPSAAIDTLFYSKLDIEQSLDLMEEKLMQLWNYKIQNYENLLLNLSKFFKFNSLPKIIDEKIKQSHNIEKQLNHLLANQMRYNELKLDKLQNAYLQHENFFNKSKKFICIRKNGKIANLEDLKSDDIVILSSQTSQKEAKIL.

This sequence belongs to the XseA family. Heterooligomer composed of large and small subunits.

It is found in the cytoplasm. The enzyme catalyses Exonucleolytic cleavage in either 5'- to 3'- or 3'- to 5'-direction to yield nucleoside 5'-phosphates.. Bidirectionally degrades single-stranded DNA into large acid-insoluble oligonucleotides, which are then degraded further into small acid-soluble oligonucleotides. In Campylobacter jejuni subsp. jejuni serotype O:23/36 (strain 81-176), this protein is Exodeoxyribonuclease 7 large subunit.